Here is a 132-residue protein sequence, read N- to C-terminus: Ubiquinol-cytochrome c reductase complex assembly factor 4 (132 aa).

The first 15 residues, 1 to 15 (MNRVLCAPAAGAVRA), serve as a signal peptide directing secretion. Topologically, residues 16 to 78 (LRLIGWASRS…GKGHQRPWWK (63 aa)) are mitochondrial matrix. Residues 29 to 72 (LPGSRDRAHPAAEEEDDPDRPIEFSSSKANPHRWSVGHTMGKGH) form a disordered region. The chain crosses the membrane as a helical span at residues 79 to 95 (VLPLSCFLVALIIWCYL). The Mitochondrial intermembrane segment spans residues 96–132 (REESEADQWLRQVWGEVPEPSDRSEEPETPAAYRART). Residues 110-132 (GEVPEPSDRSEEPETPAAYRART) form a disordered region.

Belongs to the UQCC4 family. Forms a complex, named COMB/coordinator of mitochondrial CYTB biogenesis, composed of UQCC1, UQCC2, UQCC4, UQCC5 and UQCC6; stabilizes nascent cytochrome b/MT-CYB and promotes its membrane insertion. Forms a complex, named COMA, composed of UQCC1, UQCC2 and UQCC4; activates MT-CYB translation. Forms a complex, named COMC, composed of UQCC1, UQCC2; UQCC3 and UQCC4; mediates MT-CYB hemylation and association with the first nuclear-encoded complex III subunit UQCRQ. Complexes COMA and COMB are bound to the mitochondrion inner membrane by UQCC4.

The protein resides in the mitochondrion inner membrane. In terms of biological role, required for the assembly and stability of the mitochondrial ubiquinol-cytochrome c reductase complex (complex III (CIII) or cytochrome b-c1 complex), a multisubunit transmembrane complex that is part of the mitochondrial electron transport chain (ETC) which drives oxidative phosphorylation. This is Ubiquinol-cytochrome c reductase complex assembly factor 4 from Homo sapiens (Human).